Here is a 564-residue protein sequence, read N- to C-terminus: MLRTTRGPGLGPPLLQAALGLGRAGWHWPAGRAASGGRGRAWLQPTGRETGVQVYNSLTGRKEPLIVAHAEAASWYSCGPTVYDHAHLGHACSYVRFDIIRRILTKVFGCSIVMVMGITDVDDKIIKRANEMNISPASLASLYEEDFKQDMAALKVLPPTVYLRVTENIPQIISFIEGIIARGNAYSTAKGNVYFDLKSRGDKYGKLVGVVPGPVGEPADSDKRHASDFALWKAAKPQEVFWASPWGPGRPGWHIECSAIASMVFGSQLDIHSGGIDLAFPHHENEIAQCEVFHQCEQWGNYFLHSGHLHAKGKEEKMSKSLKNYITIKDFLKTFSPDVFRFFCLRSSYRSAIDYSDSAMLQAQQLLLGLGSFLEDARAYMKGQLACGSVREAMLWERLSSTKRAVKAALADDFDTPRVVDAILGLAHHGNGQLRASLKEPEGPRSPAVFGAIISYFEQFFETVGISLANQQYVSGDGSEATLHGVVDELVRFRQKVRQFALAMPEATGDARRQQLLERQPLLEACDTLRRGLTAHGINIKDRSSTTSTWELLDQRTKDQKSAG.

Cysteine 78 is a Zn(2+) binding site. Glycine 79 lines the L-cysteine pocket. The short motif at 80-90 is the 'HIGH' region element; it reads PTVYDHAHLGH. Threonine 119 contacts L-cysteine. The short motif at 124–127 is the 'KIIK' region element; it reads KIIK. Residues cysteine 257, histidine 282, and glutamate 286 each coordinate Zn(2+). Residue histidine 282 coordinates L-cysteine. The 'KMSKS' region motif lies at 317–321; the sequence is KMSKS. Lysine 320 serves as a coordination point for ATP.

It belongs to the class-I aminoacyl-tRNA synthetase family. The cofactor is Zn(2+).

It is found in the mitochondrion. The enzyme catalyses tRNA(Cys) + L-cysteine + ATP = L-cysteinyl-tRNA(Cys) + AMP + diphosphate. It carries out the reaction 2 L-cysteine = S-sulfanyl-L-cysteine + L-alanine. It catalyses the reaction S-sulfanyl-L-cysteine + L-cysteine = S-disulfanyl-L-cysteine + L-alanine. The catalysed reaction is S-sulfanyl-L-cysteine + tRNA(Cys) + ATP = (S)-sulfanyl-L-cysteinyl-tRNA(Cys) + AMP + diphosphate. The enzyme catalyses S-disulfanyl-L-cysteine + tRNA(Cys) + ATP = (S)-disulfanyl-L-cysteinyl-tRNA(Cys) + AMP + diphosphate. Mitochondrial cysteine-specific aminoacyl-tRNA synthetase that catalyzes the ATP-dependent ligation of cysteine to tRNA(Cys). Its function is as follows. In addition to its role as an aminoacyl-tRNA synthetase, has also cysteine persulfide synthase activity. Produces reactive persulfide species such as cysteine persulfide (CysSSH) from substrate cysteine and mediate direct incorporation of CysSSH into proteins during translations, resulting in protein persulfides and polysulfides. CysSSHs behave as potent antioxidants and cellular protectants. The polypeptide is Probable cysteine--tRNA ligase, mitochondrial (Homo sapiens (Human)).